Consider the following 591-residue polypeptide: Aspartate--tRNA(Asp/Asn) ligase (591 aa).

Glutamate 176 provides a ligand contact to L-aspartate. The tract at residues 200–203 (QLFK) is aspartate. Arginine 222 is a binding site for L-aspartate. Residues 222–224 (RDE) and glutamine 231 each bind ATP. Residue histidine 450 coordinates L-aspartate. Residue glutamate 484 coordinates ATP. Arginine 491 contributes to the L-aspartate binding site. 536-539 (GLDR) contributes to the ATP binding site.

Belongs to the class-II aminoacyl-tRNA synthetase family. Type 1 subfamily. As to quaternary structure, homodimer.

The protein localises to the cytoplasm. It catalyses the reaction tRNA(Asx) + L-aspartate + ATP = L-aspartyl-tRNA(Asx) + AMP + diphosphate. Its function is as follows. Aspartyl-tRNA synthetase with relaxed tRNA specificity since it is able to aspartylate not only its cognate tRNA(Asp) but also tRNA(Asn). Reaction proceeds in two steps: L-aspartate is first activated by ATP to form Asp-AMP and then transferred to the acceptor end of tRNA(Asp/Asn). This Bacillus cereus (strain G9842) protein is Aspartate--tRNA(Asp/Asn) ligase.